Reading from the N-terminus, the 166-residue chain is HTH-type transcriptional regulator PetP (166 aa).

An HTH marR-type domain is found at 17–152; it reads DEQLRKGIEA…FRQVLEAMMD (136 aa). A DNA-binding region (H-T-H motif) is located at residues 66 to 89; that stretch reads VTTLISVLGVTKQSLNRVLRTLID.

Necessary for photosynthetic and respiratory growth. The polypeptide is HTH-type transcriptional regulator PetP (petP) (Rhodobacter capsulatus (strain ATCC BAA-309 / NBRC 16581 / SB1003)).